The chain runs to 440 residues: Nitrilase and fragile histidine triad fusion protein NitFhit (440 aa).

The CN hydrolase domain occupies 14–264 (RHFIAVCQMT…VDMCFAEIDL (251 aa)). Residues E54, K127, and C169 contribute to the active site. In terms of domain architecture, HIT spans 297 to 405 (GGLKFARFNI…LPRRAGDFGD (109 aa)). Residues 390–394 (HVHIH) carry the Histidine triad motif motif. The active-site Tele-AMP-histidine intermediate is the H392.

In the N-terminal section; belongs to the UPF0012 family. Homotetramer. The cofactor is Mn(2+).

It catalyses the reaction P(1),P(3)-bis(5'-adenosyl) triphosphate + H2O = AMP + ADP + 2 H(+). In terms of biological role, cleaves A-5'-PPP-5'A to yield AMP and ADP. This is Nitrilase and fragile histidine triad fusion protein NitFhit from Caenorhabditis elegans.